Reading from the N-terminus, the 120-residue chain is Large ribosomal subunit protein uL18 (120 aa).

It belongs to the universal ribosomal protein uL18 family. In terms of assembly, part of the 50S ribosomal subunit; part of the 5S rRNA/L5/L18/L25 subcomplex. Contacts the 5S and 23S rRNAs.

In terms of biological role, this is one of the proteins that bind and probably mediate the attachment of the 5S RNA into the large ribosomal subunit, where it forms part of the central protuberance. This chain is Large ribosomal subunit protein uL18, found in Bacillus cereus (strain AH820).